We begin with the raw amino-acid sequence, 1239 residues long: Inner tegument protein (1239 aa).

Disordered regions lie at residues 1-20, 669-704, 959-980, and 1087-1239; these read MASA…DAQP, GESP…GGGP, RPPP…DTPP, and GRNA…AEDE. An interaction with large tegument protein region spans residues 615 to 1239; the sequence is NELPKTRSLA…RPPRPTAEDE (625 aa). Over residues 1112 to 1123 the composition is skewed to low complexity; the sequence is DSSPFSFSSSDF. Residues 1139–1148 are compositionally biased toward gly residues; it reads VPGGGGGGEG. The span at 1151 to 1170 shows a compositional bias: basic and acidic residues; it reads EEERERPSDIDTAARARKVE. Positions 1180 to 1189 are enriched in low complexity; that stretch reads RTTPSPSRRA. Positions 1219 to 1232 are enriched in basic residues; the sequence is VRPRTRRGATRRPP.

This sequence belongs to the herpesviridae inner tegument protein family. Interacts (via C-terminus) with the large tegument protein/LTP (via N-terminus).

The protein resides in the virion tegument. The protein localises to the host cytoplasm. It is found in the host nucleus. It localises to the host Golgi apparatus. Its subcellular location is the host trans-Golgi network. Functionally, plays an essential role in cytoplasmic secondary envelopment during viral egress. Interacts with the capsid via the large tegument protein/LTP and participates in its transport to the host trans-Golgi network (TGN) where secondary envelopment occurs. Modulates tegumentation and capsid accumulation at the viral assembly complex. In Homo sapiens (Human), this protein is Inner tegument protein.